Here is a 177-residue protein sequence, read N- to C-terminus: RNA pyrophosphohydrolase (177 aa).

Residues 6 to 149 enclose the Nudix hydrolase domain; the sequence is GYRPNVGIVI…KRDVYRRVMK (144 aa). The Nudix box signature appears at 38-59; that stretch reads GGINPGESPEQAMYRELFEEVG.

The protein belongs to the Nudix hydrolase family. RppH subfamily. The cofactor is a divalent metal cation.

Functionally, accelerates the degradation of transcripts by removing pyrophosphate from the 5'-end of triphosphorylated RNA, leading to a more labile monophosphorylated state that can stimulate subsequent ribonuclease cleavage. The protein is RNA pyrophosphohydrolase of Pectobacterium atrosepticum (strain SCRI 1043 / ATCC BAA-672) (Erwinia carotovora subsp. atroseptica).